The following is a 246-amino-acid chain: Ribonuclease PH (246 aa).

The disordered stretch occupies residues 1-33 (MTPPKLPVREGRDALTPRPVSVQRGVNPHAPGS). Phosphate contacts are provided by residues Arg90 and 128-130 (GTR).

This sequence belongs to the RNase PH family. Homohexameric ring arranged as a trimer of dimers.

It carries out the reaction tRNA(n+1) + phosphate = tRNA(n) + a ribonucleoside 5'-diphosphate. Its function is as follows. Phosphorolytic 3'-5' exoribonuclease that plays an important role in tRNA 3'-end maturation. Removes nucleotide residues following the 3'-CCA terminus of tRNAs; can also add nucleotides to the ends of RNA molecules by using nucleoside diphosphates as substrates, but this may not be physiologically important. Probably plays a role in initiation of 16S rRNA degradation (leading to ribosome degradation) during starvation. The sequence is that of Ribonuclease PH from Deinococcus radiodurans (strain ATCC 13939 / DSM 20539 / JCM 16871 / CCUG 27074 / LMG 4051 / NBRC 15346 / NCIMB 9279 / VKM B-1422 / R1).